The sequence spans 300 residues: 4-hydroxy-tetrahydrodipicolinate synthase (300 aa).

Residue threonine 45 coordinates pyruvate. Tyrosine 140 serves as the catalytic Proton donor/acceptor. Lysine 169 acts as the Schiff-base intermediate with substrate in catalysis. A pyruvate-binding site is contributed by valine 210.

The protein belongs to the DapA family. In terms of assembly, homotetramer; dimer of dimers.

It localises to the cytoplasm. It catalyses the reaction L-aspartate 4-semialdehyde + pyruvate = (2S,4S)-4-hydroxy-2,3,4,5-tetrahydrodipicolinate + H2O + H(+). It participates in amino-acid biosynthesis; L-lysine biosynthesis via DAP pathway; (S)-tetrahydrodipicolinate from L-aspartate: step 3/4. Its function is as follows. Catalyzes the condensation of (S)-aspartate-beta-semialdehyde [(S)-ASA] and pyruvate to 4-hydroxy-tetrahydrodipicolinate (HTPA). The protein is 4-hydroxy-tetrahydrodipicolinate synthase of Helicobacter acinonychis (strain Sheeba).